A 485-amino-acid chain; its full sequence is MTQWIAGEWVEGLGEEFTSLSPYDNQVVWRGKGATAEQVEMAVKAARQAFVGWKKLSVAEREAMVLAFAEQVKENSEEIAQVIAKETGKPLWETRTEAAAMAGKIAISIRAYHERTGESQKEAAGNQIVLRHRPLGVMAVFGPYNFPGHLPNGHIVPALLAGNTVVFKPSEQTPWTGELAMKLWQAAGLPQGVINLVQGGKETGIALAESKGIDGLLFTGSANTGHLLHRQFAGQPGKMLALEMGGNNPMVITDHYGDLDATVYTIIQSAFISAGQRCTCARRLYIPLGEKGDALITRLVEATKKLRVDQPFAEPAPFMGPQISEAAANFILAAQANLQSLGGESLIEAKAGEAAFVTPGIIDVTNIAELPDEEYFGPLLQVVRYQTLEQAVELANDTRFGLSAGLVSTDDGEWQYFVDHIRAGIVNRNRQLTGASGDAPFGGPGASGNLRPSAYYAADYCAYPMASMEGEETLLPATLSPGVEL.

Residue 220-225 (GSANTG) coordinates NAD(+). Catalysis depends on residues glutamate 243 and cysteine 278.

This sequence belongs to the aldehyde dehydrogenase family. AstD subfamily.

It carries out the reaction N-succinyl-L-glutamate 5-semialdehyde + NAD(+) + H2O = N-succinyl-L-glutamate + NADH + 2 H(+). Its pathway is amino-acid degradation; L-arginine degradation via AST pathway; L-glutamate and succinate from L-arginine: step 4/5. In terms of biological role, catalyzes the NAD-dependent reduction of succinylglutamate semialdehyde into succinylglutamate. This Vibrio vulnificus (strain YJ016) protein is N-succinylglutamate 5-semialdehyde dehydrogenase.